The sequence spans 28 residues: leu operon leader peptide (28 aa).

In terms of biological role, involved in control of the biosynthesis of leucine. This Shigella flexneri protein is leu operon leader peptide (leuL).